We begin with the raw amino-acid sequence, 210 residues long: MTQQLGAMVLTCCTAKCCEPVSSRGDRETADGRMGERRAVEVWRTADRRWRMADGRTADGRAVEWRSGRMGGPRRDGRVASSGVEGGPWMAASASGVPRHGRHRVWCLVQPSGRPAGRQGESERAGESETRVGVGVRLAASGLRRGRVAACECVMLLLVWCLPPGREAEQRSLGISYMGWASVVMDGSWSWPYCSHPELENTVTKRDHPD.

A compositionally biased stretch (basic and acidic residues) spans 67–78 (SGRMGGPRRDGR). The segment at 67 to 87 (SGRMGGPRRDGRVASSGVEGG) is disordered.

This chain is Transposable element activator uncharacterized 23 kDa protein, found in Zea mays (Maize).